The sequence spans 114 residues: PDZK1-interacting protein 1 (114 aa).

Topologically, residues 1 to 28 are extracellular; it reads MSAFGLLILGLLTAVPPASCRQGLGNLQ. The helical transmembrane segment at 29 to 51 threads the bilayer; that stretch reads PWMQGLIAVAVFLVLVAIAFAVN. Topologically, residues 52–114 are cytoplasmic; sequence HFWCQEEPEP…EEGKVRSTPM (63 aa). S85 carries the phosphoserine modification. A disordered region spans residues 95–114; that stretch reads HENAYENVPEEEGKVRSTPM. Basic and acidic residues predominate over residues 105 to 114; sequence EEGKVRSTPM.

Belongs to the PDZK1-interacting protein 1/SMIM24 family. Forms a heterodimer (via N-terminal transmembrane helix) with SLC5A2/SGLT2 (via TM13); this interaction enhances SLC5A2 transporter activity. Interacts with PDZK1.

It is found in the apical cell membrane. In terms of biological role, auxiliary protein of electrogenic Na(+)-coupled sugar symporter SLC5A2/SGLT2 and SLC5A1/SGLT1. Essential for the transporter activity of SLC5A2/SGLT2 but not SLC5A1/SGLT1. The polypeptide is PDZK1-interacting protein 1 (Pongo abelii (Sumatran orangutan)).